A 360-amino-acid polypeptide reads, in one-letter code: Heat-inducible transcription repressor HrcA (360 aa).

The protein belongs to the HrcA family.

In terms of biological role, negative regulator of class I heat shock genes (grpE-dnaK-dnaJ and groELS operons). Prevents heat-shock induction of these operons. The protein is Heat-inducible transcription repressor HrcA of Gloeobacter violaceus (strain ATCC 29082 / PCC 7421).